We begin with the raw amino-acid sequence, 467 residues long: Argininosuccinate lyase (467 aa).

Belongs to the lyase 1 family. Argininosuccinate lyase subfamily.

The protein resides in the cytoplasm. The catalysed reaction is 2-(N(omega)-L-arginino)succinate = fumarate + L-arginine. It functions in the pathway amino-acid biosynthesis; L-arginine biosynthesis; L-arginine from L-ornithine and carbamoyl phosphate: step 3/3. The chain is Argininosuccinate lyase from Rhizobium johnstonii (strain DSM 114642 / LMG 32736 / 3841) (Rhizobium leguminosarum bv. viciae).